Consider the following 113-residue polypeptide: Transmembrane protein 256 (113 aa).

The signal sequence occupies residues 1–29; sequence MAGPAAAFRRLGALSGAAALGFASYGAHG. Topologically, residues 30–63 are extracellular; that stretch reads AQFPDAYGKELFDKANKHHFLHSLALLGVPHCRK. Lys-43 bears the N6-acetyllysine mark. A helical transmembrane segment spans residues 64 to 84; that stretch reads PLWAGLLLASGTTLFCTSFYY. The Cytoplasmic segment spans residues 85–92; it reads QALSGDPS. The chain crosses the membrane as a helical span at residues 93–113; sequence IQTLAPAGGTLLLLGWLALAL.

It belongs to the TMEM256 family.

Its subcellular location is the membrane. This chain is Transmembrane protein 256 (TMEM256), found in Homo sapiens (Human).